Consider the following 348-residue polypeptide: Quinone oxidoreductase-like protein 1 (348 aa).

Belongs to the zinc-containing alcohol dehydrogenase family. Quinone oxidoreductase subfamily. In terms of assembly, component of the FERRY complex composed of five subunits, TBCK, PPP1R21, FERRY3, CRYZL1 and GATD1 with a ratio of 1:2:1:2:4, respectively.

It localises to the early endosome. Component of the FERRY complex (Five-subunit Endosomal Rab5 and RNA/ribosome intermediary). The FERRY complex directly interacts with mRNAs and RAB5A, and functions as a RAB5A effector involved in the localization and the distribution of specific mRNAs most likely by mediating their endosomal transport. The complex recruits mRNAs and ribosomes to early endosomes through direct mRNA-interaction. This Mus musculus (Mouse) protein is Quinone oxidoreductase-like protein 1 (Cryzl1).